A 90-amino-acid chain; its full sequence is Probable Fe(2+)-trafficking protein (90 aa).

Belongs to the Fe(2+)-trafficking protein family. As to quaternary structure, monomer.

Its function is as follows. Could be a mediator in iron transactions between iron acquisition and iron-requiring processes, such as synthesis and/or repair of Fe-S clusters in biosynthetic enzymes. In Pectobacterium atrosepticum (strain SCRI 1043 / ATCC BAA-672) (Erwinia carotovora subsp. atroseptica), this protein is Probable Fe(2+)-trafficking protein.